The primary structure comprises 774 residues: MTGTTPLPSSSLSVEQVNRIASNQEQNPFDILGPHPYEHEGQAGWVIRAYLPEAQEAAVICPALRREFAMHPVHHPHFFETWVPEETLEIYQLRITEGERERIIYDPYAFRSPLLTDYDIHLFAEGNHHRIYEKLGAHPCELENVAGVNFAVWAPSARNVSILGDFNSWDGRKHQMARRSNGIWELFIPELTVGAAYKYEIKNYDGHIYEKSDPYGFQQEVRPKTASIVADLDRYTWGDADWLERRRHQEPLRQPISVYEVHLGSWMHASSDAIATDAQGKPLPPVPVADLKPGARFLTYRELADRLIPYVLDLGYSHIELLPIAEHPFDGSWGYQVTGYYAATSRYGSPEDFMYFVDRCHQNGIGVILDWVPGHFPKDGHGLAFFDGTHLYEHADSRQGEHREWGTLVFNYGRHEVRNFLAANALFWFDKYHIDGIRVDAVASMLYLDYNRKEGEWIPNEYGGRENIEAADFLRQVNHLIFSYFPGALSIAEESTSWPMVSWPTYVGGLGFNLKWNMGWMHDMLDYFSMDPWFRQFHQNNVTFSIWYAFSENFMLALSHDEVVHGKSNLIGKMPGDEWQKFANLRCLLGYMFTHPGKKTLFMGMEFGQWAEWNVWGDLEWHLLQYEPHQGLKQFVKDLNHLYRNAPALYSEDCNQAGFEWIDCSDNRHSIVSFIRRAHESDRFLVVVCNFTPQPHAHYRIGVPVAGFYREIFNSDARSYGGSNMGNLGGKWTDEWSCHNRPYSLDLCLPPLTTLVLELASGPESLSEAANSPL.

Asp440 acts as the Nucleophile in catalysis. The active-site Proton donor is Glu493.

The protein belongs to the glycosyl hydrolase 13 family. GlgB subfamily. As to quaternary structure, monomer.

The enzyme catalyses Transfers a segment of a (1-&gt;4)-alpha-D-glucan chain to a primary hydroxy group in a similar glucan chain.. Its pathway is glycan biosynthesis; glycogen biosynthesis. Its function is as follows. Catalyzes the formation of the alpha-1,6-glucosidic linkages in glycogen by scission of a 1,4-alpha-linked oligosaccharide from growing alpha-1,4-glucan chains and the subsequent attachment of the oligosaccharide to the alpha-1,6 position. The polypeptide is 1,4-alpha-glucan branching enzyme GlgB (glgB) (Synechococcus elongatus (strain ATCC 33912 / PCC 7942 / FACHB-805) (Anacystis nidulans R2)).